A 42-amino-acid chain; its full sequence is Delta-actitoxin-Ael2d (42 aa).

3 disulfides stabilise this stretch: cysteine 4–cysteine 37, cysteine 6–cysteine 30, and cysteine 20–cysteine 38.

The protein belongs to the sea anemone type 3 (BDS) potassium channel toxin family.

It is found in the secreted. The protein localises to the nematocyst. Functionally, binds to voltage-gated sodium channels (Nav), and slows down the inactivation of mammalian Nav1.2/SCN2A, Nav1.3/SCN3A Nav1.4/SCN4A, Nav1.6/SCN8A, insect DmNav1 and BgNav1 channels, and arachnid VdNav1 channel. This toxin acts by binding to site 3 of sodium channels. This Anthopleura elegantissima (Green aggregating anemone) protein is Delta-actitoxin-Ael2d.